The chain runs to 701 residues: Polyribonucleotide nucleotidyltransferase (701 aa).

Mg(2+) is bound by residues Asp487 and Asp493. One can recognise a KH domain in the interval 554–613 (PTMIAMKIDTDKIRDVIGKGGATIRAICEETKASIDIEDDGSIKIFGETKEAAEAAKQRI). Residues 623-691 (GKIYVGKVER…NRGRIKLSIK (69 aa)) form the S1 motif domain.

It belongs to the polyribonucleotide nucleotidyltransferase family. In terms of assembly, component of the RNA degradosome, which is a multiprotein complex involved in RNA processing and mRNA degradation. It depends on Mg(2+) as a cofactor.

The protein resides in the cytoplasm. The enzyme catalyses RNA(n+1) + phosphate = RNA(n) + a ribonucleoside 5'-diphosphate. Functionally, involved in mRNA degradation. Catalyzes the phosphorolysis of single-stranded polyribonucleotides processively in the 3'- to 5'-direction. The polypeptide is Polyribonucleotide nucleotidyltransferase (Pseudomonas putida (strain GB-1)).